The sequence spans 255 residues: 5-oxoprolinase subunit A (255 aa).

Belongs to the LamB/PxpA family. As to quaternary structure, forms a complex composed of PxpA, PxpB and PxpC.

It carries out the reaction 5-oxo-L-proline + ATP + 2 H2O = L-glutamate + ADP + phosphate + H(+). Its function is as follows. Catalyzes the cleavage of 5-oxoproline to form L-glutamate coupled to the hydrolysis of ATP to ADP and inorganic phosphate. This is 5-oxoprolinase subunit A from Clostridium beijerinckii (strain ATCC 51743 / NCIMB 8052) (Clostridium acetobutylicum).